Consider the following 295-residue polypeptide: Glutamyl-Q tRNA(Asp) synthetase (295 aa).

L-glutamate contacts are provided by residues 6 to 10 (RFAPS) and glutamate 42. A 'HIGH' region motif is present at residues 9–19 (PSPTGAMHLGN). Zn(2+) is bound by residues cysteine 93, cysteine 95, tyrosine 118, and cysteine 122. L-glutamate is bound by residues tyrosine 177 and arginine 195. The 'KMSKS' region motif lies at 233-237 (RLAKR). Residue lysine 236 coordinates ATP.

Belongs to the class-I aminoacyl-tRNA synthetase family. GluQ subfamily. The cofactor is Zn(2+).

Functionally, catalyzes the tRNA-independent activation of glutamate in presence of ATP and the subsequent transfer of glutamate onto a tRNA(Asp). Glutamate is transferred on the 2-amino-5-(4,5-dihydroxy-2-cyclopenten-1-yl) moiety of the queuosine in the wobble position of the QUC anticodon. The sequence is that of Glutamyl-Q tRNA(Asp) synthetase from Deinococcus radiodurans (strain ATCC 13939 / DSM 20539 / JCM 16871 / CCUG 27074 / LMG 4051 / NBRC 15346 / NCIMB 9279 / VKM B-1422 / R1).